The sequence spans 251 residues: Triosephosphate isomerase (251 aa).

Residue 12 to 14 participates in substrate binding; that stretch reads NWK. Catalysis depends on His99, which acts as the Electrophile. The active-site Proton acceptor is Glu169. Substrate-binding positions include Gly175, Ser214, and 235–236; that span reads GG.

Belongs to the triosephosphate isomerase family. Homodimer.

Its subcellular location is the cytoplasm. The catalysed reaction is D-glyceraldehyde 3-phosphate = dihydroxyacetone phosphate. Its pathway is carbohydrate biosynthesis; gluconeogenesis. It participates in carbohydrate degradation; glycolysis; D-glyceraldehyde 3-phosphate from glycerone phosphate: step 1/1. Its function is as follows. Involved in the gluconeogenesis. Catalyzes stereospecifically the conversion of dihydroxyacetone phosphate (DHAP) to D-glyceraldehyde-3-phosphate (G3P). This is Triosephosphate isomerase from Bradyrhizobium sp. (strain BTAi1 / ATCC BAA-1182).